The sequence spans 378 residues: Protein KlaB (378 aa).

It belongs to the TelA family.

Its function is as follows. Belongs to the kla operon, which is associated with cryptic tellurite resistance, and IncW plasmid fertility inhibition. The polypeptide is Protein KlaB (klaB) (Escherichia coli).